The chain runs to 380 residues: Ribosomal RNA large subunit methyltransferase F (380 aa).

The disordered stretch occupies residues 1–32; sequence MSHKTKPSTQERKAGKPSAPKRKVISKSPNSK.

Belongs to the methyltransferase superfamily. METTL16/RlmF family.

It localises to the cytoplasm. The enzyme catalyses adenosine(1618) in 23S rRNA + S-adenosyl-L-methionine = N(6)-methyladenosine(1618) in 23S rRNA + S-adenosyl-L-homocysteine + H(+). In terms of biological role, specifically methylates the adenine in position 1618 of 23S rRNA. The sequence is that of Ribosomal RNA large subunit methyltransferase F from Shewanella halifaxensis (strain HAW-EB4).